A 95-amino-acid polypeptide reads, in one-letter code: Co-chaperonin GroES (95 aa).

It belongs to the GroES chaperonin family. As to quaternary structure, heptamer of 7 subunits arranged in a ring. Interacts with the chaperonin GroEL.

It localises to the cytoplasm. Together with the chaperonin GroEL, plays an essential role in assisting protein folding. The GroEL-GroES system forms a nano-cage that allows encapsulation of the non-native substrate proteins and provides a physical environment optimized to promote and accelerate protein folding. GroES binds to the apical surface of the GroEL ring, thereby capping the opening of the GroEL channel. In Nitratidesulfovibrio vulgaris (strain DSM 19637 / Miyazaki F) (Desulfovibrio vulgaris), this protein is Co-chaperonin GroES.